The sequence spans 185 residues: Photosystem I assembly protein Ycf4 (185 aa).

2 helical membrane-spanning segments follow: residues 20–40 and 57–77; these read GNFF…SVGA and ILFF…LFIS.

It belongs to the Ycf4 family.

The protein resides in the plastid. Its subcellular location is the chloroplast thylakoid membrane. Functionally, seems to be required for the assembly of the photosystem I complex. The chain is Photosystem I assembly protein Ycf4 from Lolium perenne (Perennial ryegrass).